The chain runs to 1017 residues: DNA polymerase (1017 aa).

The protein belongs to the DNA polymerase type-B family. As to quaternary structure, heterodimer with the terminal protein; this heterodimer binds to bp 9 to 18 of the genome. Forms a complex with viral pTP, DBP and hosts NFIA and POU2F1/OCT1 for initiation of replication.

It is found in the host nucleus. The catalysed reaction is DNA(n) + a 2'-deoxyribonucleoside 5'-triphosphate = DNA(n+1) + diphosphate. Functionally, eukaryotic-type DNA polymerase involved in viral genomic replication. DNA synthesis is protein primed, and acts in a strand displacement replication. Assembles in complex with viral pTP, DBP, host NFIA and host POU2F1/OCT1 on viral origin of replication. The polymerase covalently transfers dCMP onto pTP, thereby initiating complementary strand synthesis. In Bovine adenovirus 2 (BAdV-2), this protein is DNA polymerase.